Consider the following 194-residue polypeptide: GTP cyclohydrolase 1 (194 aa).

Positions 83, 86, and 155 each coordinate Zn(2+).

Belongs to the GTP cyclohydrolase I family. In terms of assembly, toroid-shaped homodecamer, composed of two pentamers of five dimers.

The catalysed reaction is GTP + H2O = 7,8-dihydroneopterin 3'-triphosphate + formate + H(+). It functions in the pathway cofactor biosynthesis; 7,8-dihydroneopterin triphosphate biosynthesis; 7,8-dihydroneopterin triphosphate from GTP: step 1/1. The sequence is that of GTP cyclohydrolase 1 from Streptococcus pyogenes serotype M5 (strain Manfredo).